Reading from the N-terminus, the 87-residue chain is Large ribosomal subunit protein bL27 (87 aa).

The protein belongs to the bacterial ribosomal protein bL27 family.

The polypeptide is Large ribosomal subunit protein bL27 (Pseudarthrobacter chlorophenolicus (strain ATCC 700700 / DSM 12829 / CIP 107037 / JCM 12360 / KCTC 9906 / NCIMB 13794 / A6) (Arthrobacter chlorophenolicus)).